Here is a 725-residue protein sequence, read N- to C-terminus: Sodium/hydrogen exchanger 7 (725 aa).

The segment at 1-20 (MEPGDAARPGSGRATGAPPP) is disordered. Over 1 to 21 (MEPGDAARPGSGRATGAPPPR) the chain is Cytoplasmic. Residues 22-42 (LLLLPLLLGWGLRVAAAASAS) traverse the membrane as a helical segment. Topologically, residues 43–70 (SSGAAAEDSSAMEELATEKEAEESHRQD) are lumenal. A helical transmembrane segment spans residues 71 to 91 (SVSLLTFILLLTLTILTIWLF). At 92-95 (KHRR) the chain is on the cytoplasmic side. The helical transmembrane segment at 96 to 116 (VRFLHETGLAMIYGLIVGVIL) threads the bilayer. The Lumenal segment spans residues 117–175 (RYGTPATSGRDKSLSCTQEDRAFSTLLVNVSGKFFEYTLKGEISPGKINSVEQNDMLRK). Asn-145 carries an N-linked (GlcNAc...) asparagine glycan. The chain crosses the membrane as a helical span at residues 176-196 (VTFDPEVFFNILLPPIIFHAG). The Cytoplasmic segment spans residues 197-210 (YSLKKRHFFRNLGS). Residues 211-231 (ILAYAFLGTAVSCFIIGNLMY) traverse the membrane as a helical segment. Residues 232 to 251 (GVVKLMKIMGQLSDKFYYTD) lie on the Lumenal side of the membrane. Residues 252–272 (CLFFGAIISATDPVTVLAIFN) traverse the membrane as a helical segment. Residues 273–277 (ELHAD) lie on the Cytoplasmic side of the membrane. The chain crosses the membrane as a helical span at residues 278-298 (VDLYALLFGESVLNDAVAIVL). Residues 299–322 (SSSIVAYQPAGLNTHAFDAAAFFK) lie on the Lumenal side of the membrane. The helical transmembrane segment at 323–343 (SVGIFLGIFSGSFTMGAVTGV) threads the bilayer. The Cytoplasmic portion of the chain corresponds to 344–349 (NANVTK). The next 2 membrane-spanning stretches (helical) occupy residues 350-370 (FTKLHCFPLLETALFFLMSWS) and 371-391 (TFLLAEACGFTGVVAVLFCGI). The Cytoplasmic portion of the chain corresponds to 392-414 (TQAHYTYNNLSVESRSRTKQLFE). A helical transmembrane segment spans residues 415-435 (VLHFLAENFIFSYMGLALFTF). Topologically, residues 436-442 (QKHVFSP) are lumenal. A helical membrane pass occupies residues 443–463 (IFIIGAFVAIFLGRAAHIYPL). Residues 464–474 (SFFLNLGRRHK) are Cytoplasmic-facing. Residues 475–497 (IGWNFQHMMMFSGLRGAMAFALA) form a helical membrane-spanning segment. Residues 498 to 513 (IRDTASYARQMMFTTT) are Lumenal-facing. The helical transmembrane segment at 514–534 (LLIVFFTVWIIGGGTTPMLSW) threads the bilayer. Required for trans-Golgi network localization stretches follow at residues 533–559 (SWLNIRVGVEEPSEEDQNEHHWQYFRV) and 563–568 (PDQDPP). The Cytoplasmic portion of the chain corresponds to 535-725 (LNIRVGVEEP…RLVFPLEDNA (191 aa)). Phosphoserine is present on Ser-545. Disordered regions lie at residues 567-590 (PPPNNDSFQVLQGDGPDSARGNRT) and 669-714 (TVTA…SSRG). Low complexity predominate over residues 675–684 (SSSSHTASTS). Basic and acidic residues predominate over residues 687 to 704 (GSRRTKSSSEEVLERDLG).

The protein belongs to the monovalent cation:proton antiporter 1 (CPA1) transporter (TC 2.A.36) family. As to quaternary structure, interacts with SCAMP1, SCAMP2 and SCAMP5; may participate in its shuttling from trans-Golgi network to recycling endosomes. Post-translationally, N-glycosylated. In terms of tissue distribution, ubiquitously expressed.

It localises to the golgi apparatus. The protein resides in the trans-Golgi network membrane. Its subcellular location is the recycling endosome membrane. The protein localises to the cell membrane. It catalyses the reaction Na(+)(in) + H(+)(out) = Na(+)(out) + H(+)(in). The catalysed reaction is K(+)(in) + H(+)(out) = K(+)(out) + H(+)(in). Inhibited by benzamil and quinine but not by amiloride. Golgi Na(+), K(+)/(H+) antiporter. Mediates the electoneutral influx of Na(+) or K(+) in exchange for H(+). May contribute to the regulation of Golgi apparatus volume and pH. The protein is Sodium/hydrogen exchanger 7 (SLC9A7) of Homo sapiens (Human).